The sequence spans 386 residues: GTPase Obg (386 aa).

The region spanning 4 to 162 (SNFVDYVKIY…RTVILQLKLL (159 aa)) is the Obg domain. The disordered stretch occupies residues 18-44 (KGGRGSSHFRREKYIPKGGPDGGDGGR). The 167-residue stretch at 163–329 (ADVGLVGFPN…LKDLLWKELN (167 aa)) folds into the OBG-type G domain. Residues 169-176 (GFPNAGKS), 194-198 (FTTLE), 216-219 (DIPG), 283-286 (TKSD), and 310-312 (SSI) each bind GTP. 2 residues coordinate Mg(2+): Ser-176 and Thr-196. Residues 357–386 (YIFPVDEDEDDPDEEYEEYWDDDEDEDTRK) form a disordered region.

It belongs to the TRAFAC class OBG-HflX-like GTPase superfamily. OBG GTPase family. As to quaternary structure, monomer. The cofactor is Mg(2+).

The protein resides in the cytoplasm. An essential GTPase which binds GTP, GDP and possibly (p)ppGpp with moderate affinity, with high nucleotide exchange rates and a fairly low GTP hydrolysis rate. Plays a role in control of the cell cycle, stress response, ribosome biogenesis and in those bacteria that undergo differentiation, in morphogenesis control. This Parabacteroides distasonis (strain ATCC 8503 / DSM 20701 / CIP 104284 / JCM 5825 / NCTC 11152) protein is GTPase Obg.